The chain runs to 321 residues: MQFLSSFVFAALALLPLSAMAVDEAASEIASSTKPASTNGTLSFCLGVKHADGTCKYTDDYLADFEVLAPYTNMIRTYATSDCNTLEYLLPALAQSPYNFSAILGVWPTDDAHYDLEKQALMQYLPQYGVDHVRAITVGSEVLYRNDLPADVLAERIYDVRGLVQQKLGFDVPVGTADSWNLWAGGSGDVVITASDFIMSNDFPYWQGQNTSNMTNTFISDTLAALERVQSVKGTNNVTFWVGETGWPTDGPSYGEADATVDIASEFFQEALCNIRRKGIDIFFFEAFDEDWKGDSSSVEPYFGAMYSNRTLKYNLNCTSE.

A signal peptide spans 1-21 (MQFLSSFVFAALALLPLSAMA). 2 N-linked (GlcNAc...) asparagine glycosylation sites follow: Asn-39 and Asn-99. The active-site Proton donor is the Glu-141. Residues Asn-210, Asn-213, and Asn-237 are each glycosylated (N-linked (GlcNAc...) asparagine). The Nucleophile role is filled by Glu-244. N-linked (GlcNAc...) asparagine glycans are attached at residues Asn-309 and Asn-317.

The protein belongs to the glycosyl hydrolase 17 family.

The protein localises to the secreted. Its subcellular location is the cell wall. It catalyses the reaction Successive hydrolysis of beta-D-glucose units from the non-reducing ends of (1-&gt;3)-beta-D-glucans, releasing alpha-glucose.. Glucanases possibly play a role in cell expansion during growth, in cell-cell fusion during mating, and in spore release during sporulation. This enzyme may be involved in beta-glucan degradation and also function biosynthetically as a transglycosylase. The sequence is that of Glucan 1,3-beta-glucosidase (bgl2) from Schizosaccharomyces pombe (strain 972 / ATCC 24843) (Fission yeast).